Here is an 84-residue protein sequence, read N- to C-terminus: Small ribosomal subunit protein uS17 (84 aa).

This sequence belongs to the universal ribosomal protein uS17 family. As to quaternary structure, part of the 30S ribosomal subunit.

Functionally, one of the primary rRNA binding proteins, it binds specifically to the 5'-end of 16S ribosomal RNA. The chain is Small ribosomal subunit protein uS17 from Serratia proteamaculans (strain 568).